A 306-amino-acid polypeptide reads, in one-letter code: N-acetylmuramic acid 6-phosphate etherase (306 aa).

The region spanning 55–218 is the SIS domain; that stretch reads AAATLLAGGR…STGAMIKIGK (164 aa). Residue Glu83 is the Proton donor of the active site. The active site involves Glu114.

This sequence belongs to the GCKR-like family. MurNAc-6-P etherase subfamily. Homodimer.

The enzyme catalyses N-acetyl-D-muramate 6-phosphate + H2O = N-acetyl-D-glucosamine 6-phosphate + (R)-lactate. It functions in the pathway amino-sugar metabolism; 1,6-anhydro-N-acetylmuramate degradation. It participates in amino-sugar metabolism; N-acetylmuramate degradation. The protein operates within cell wall biogenesis; peptidoglycan recycling. Its function is as follows. Specifically catalyzes the cleavage of the D-lactyl ether substituent of MurNAc 6-phosphate, producing GlcNAc 6-phosphate and D-lactate. Together with AnmK, is also required for the utilization of anhydro-N-acetylmuramic acid (anhMurNAc) either imported from the medium or derived from its own cell wall murein, and thus plays a role in cell wall recycling. The polypeptide is N-acetylmuramic acid 6-phosphate etherase (Erwinia tasmaniensis (strain DSM 17950 / CFBP 7177 / CIP 109463 / NCPPB 4357 / Et1/99)).